The chain runs to 309 residues: MPAEGGKTDMERIGLFSEMEYITVGDKYVSQFNRPFNESASKNRQILPGGSKEMSNLQAGYFDPHFVRIFEGESYVNPNQVRRRYMMEEAKKNLSKAFLPSNGEKKPCGLGSYYGTIGGPVPFFSAQSKPKEKYEPPGKNLYTNPGKKGTGYGYANITIGKQFSHSSDLYDAAKLNNKKENEEHRRLLKGTAFKLNLYTREYFDTNPYMSEKPLPPIKKVEKKETVGNPFKPSSPGKKAGGMKAGTFDPYPSHSADPYVVKLKSPSSKSAKVFHPPGGPKSRPIESIMALNVKRALNMKNYKTASVQSY.

Residues 225–251 (TVGNPFKPSSPGKKAGGMKAGTFDPYP) are disordered.

Belongs to the CFAP96 family.

Its subcellular location is the cytoplasm. The protein resides in the cytoskeleton. It is found in the microtubule organizing center. The protein localises to the centrosome. This chain is Cilia-and flagella-associated protein 96 (CFAP96), found in Bos taurus (Bovine).